A 97-amino-acid polypeptide reads, in one-letter code: uncharacterized protein (97 aa).

This is an uncharacterized protein from Bacillus subtilis (strain 168).